Consider the following 254-residue polypeptide: tRNA (guanine-N(7)-)-methyltransferase (254 aa).

Positions M1–G34 are disordered. 4 residues coordinate S-adenosyl-L-methionine: E87, E112, D139, and D162. D162 is an active-site residue. Residues K166, D198, and T233–E236 contribute to the substrate site.

The protein belongs to the class I-like SAM-binding methyltransferase superfamily. TrmB family.

The enzyme catalyses guanosine(46) in tRNA + S-adenosyl-L-methionine = N(7)-methylguanosine(46) in tRNA + S-adenosyl-L-homocysteine. Its pathway is tRNA modification; N(7)-methylguanine-tRNA biosynthesis. Functionally, catalyzes the formation of N(7)-methylguanine at position 46 (m7G46) in tRNA. This chain is tRNA (guanine-N(7)-)-methyltransferase, found in Bordetella bronchiseptica (strain ATCC BAA-588 / NCTC 13252 / RB50) (Alcaligenes bronchisepticus).